The primary structure comprises 282 residues: 4-diphosphocytidyl-2-C-methyl-D-erythritol kinase (282 aa).

Lys11 is a catalytic residue. 95–105 (PMGGGVGGGSS) provides a ligand contact to ATP. Residue Asp137 is part of the active site.

This sequence belongs to the GHMP kinase family. IspE subfamily.

The enzyme catalyses 4-CDP-2-C-methyl-D-erythritol + ATP = 4-CDP-2-C-methyl-D-erythritol 2-phosphate + ADP + H(+). Its pathway is isoprenoid biosynthesis; isopentenyl diphosphate biosynthesis via DXP pathway; isopentenyl diphosphate from 1-deoxy-D-xylulose 5-phosphate: step 3/6. Catalyzes the phosphorylation of the position 2 hydroxy group of 4-diphosphocytidyl-2C-methyl-D-erythritol. The protein is 4-diphosphocytidyl-2-C-methyl-D-erythritol kinase of Haemophilus ducreyi (strain 35000HP / ATCC 700724).